Here is a 385-residue protein sequence, read N- to C-terminus: Chaperone protein DnaJ (385 aa).

The J domain occupies 5-70; that stretch reads DYYEVLGVSK…ERKAAYDRYG (66 aa). The CR-type zinc finger occupies 143-221; the sequence is GLHKTINVPT…CNGHGRVEKD (79 aa). The Zn(2+) site is built by cysteine 156, cysteine 159, cysteine 173, cysteine 176, cysteine 195, cysteine 198, cysteine 209, and cysteine 212. CXXCXGXG motif repeat units lie at residues 156–163, 173–180, 195–202, and 209–216; these read CTSCEGTG, CPTCSGMG, CPTCSGLG, and CKTCNGHG.

This sequence belongs to the DnaJ family. In terms of assembly, homodimer. Zn(2+) is required as a cofactor.

The protein resides in the cytoplasm. Participates actively in the response to hyperosmotic and heat shock by preventing the aggregation of stress-denatured proteins and by disaggregating proteins, also in an autonomous, DnaK-independent fashion. Unfolded proteins bind initially to DnaJ; upon interaction with the DnaJ-bound protein, DnaK hydrolyzes its bound ATP, resulting in the formation of a stable complex. GrpE releases ADP from DnaK; ATP binding to DnaK triggers the release of the substrate protein, thus completing the reaction cycle. Several rounds of ATP-dependent interactions between DnaJ, DnaK and GrpE are required for fully efficient folding. Also involved, together with DnaK and GrpE, in the DNA replication of plasmids through activation of initiation proteins. The chain is Chaperone protein DnaJ from Ruegeria sp. (strain TM1040) (Silicibacter sp.).